The chain runs to 322 residues: Transmembrane protein 171 (322 aa).

4 consecutive transmembrane segments (helical) span residues 22–42 (IFFL…LSIF), 57–77 (IVLK…VILA), 112–132 (LIFG…GIWV), and 159–179 (FLSL…FFVV). A disordered region spans residues 223–322 (PPPYFPESSA…LGAPSDASPP (100 aa)). A compositionally biased stretch (low complexity) spans 228 to 241 (PESSAAAPSPGANS). 2 stretches are compositionally biased toward polar residues: residues 242–267 (LHQI…NQGA) and 279–289 (ISGQGSSSERS).

Its subcellular location is the membrane. This Mus musculus (Mouse) protein is Transmembrane protein 171 (Tmem171).